Consider the following 238-residue polypeptide: MNPEQFQMALAEKGIELSDDQMKQFHDYFKMLVEWNEKMNLTAITDEKEVYLKHFYDSISAAFYVDFTKFDTICDVGAGAGFPSLPIKICFPHLKVSIVDSLKKRMTFLDALAEKLGLTDVHFYHDRAETFGQNKAHREKYDLVTARAVARMSVLSELCMPLVKKGGSFLVMKAAQAEQELQTAEKAIKLFGGKVEEHFAFALPVEESERNIYVITKTKETPNKYPRKPGTPNKLPIE.

S-adenosyl-L-methionine contacts are provided by residues Gly-77, Phe-82, 128–129 (AE), and Arg-147.

Belongs to the methyltransferase superfamily. RNA methyltransferase RsmG family.

The protein localises to the cytoplasm. Its function is as follows. Specifically methylates the N7 position of guanine in position 535 of 16S rRNA. The sequence is that of Ribosomal RNA small subunit methyltransferase G from Listeria innocua serovar 6a (strain ATCC BAA-680 / CLIP 11262).